Here is a 445-residue protein sequence, read N- to C-terminus: Ribosomal protein uS12 methylthiotransferase RimO (445 aa).

The region spanning 4–119 is the MTTase N-terminal domain; it reads YKVGMVSLGC…INEAIMNFIN (116 aa). [4Fe-4S] cluster is bound by residues cysteine 13, cysteine 48, cysteine 82, cysteine 157, cysteine 161, and cysteine 164. A Radical SAM core domain is found at 143–373; it reads TTDKATAYLR…MLLQKELSEE (231 aa). The 66-residue stretch at 376–441 folds into the TRAM domain; it reads KNKLGREYDV…EYDLVGVVCN (66 aa).

Belongs to the methylthiotransferase family. RimO subfamily. [4Fe-4S] cluster serves as cofactor.

Its subcellular location is the cytoplasm. The catalysed reaction is L-aspartate(89)-[ribosomal protein uS12]-hydrogen + (sulfur carrier)-SH + AH2 + 2 S-adenosyl-L-methionine = 3-methylsulfanyl-L-aspartate(89)-[ribosomal protein uS12]-hydrogen + (sulfur carrier)-H + 5'-deoxyadenosine + L-methionine + A + S-adenosyl-L-homocysteine + 2 H(+). In terms of biological role, catalyzes the methylthiolation of an aspartic acid residue of ribosomal protein uS12. The protein is Ribosomal protein uS12 methylthiotransferase RimO of Clostridium perfringens (strain SM101 / Type A).